A 402-amino-acid chain; its full sequence is Protein indeterminate-domain 12 (402 aa).

Residues 47–66 are disordered; sequence TETHKPKKKRGLPGNPDPDA. Serine 72 is modified (phosphoserine). 2 consecutive C2H2-type zinc fingers follow at residues 82–104 and 124–154; these read FVCE…RRGH and YVCP…CRKH. Positions 146 to 153 match the Nuclear localization signal motif; that stretch reads IKKHFCRK. The C2H2-type 2; degenerate zinc finger occupies 159-183; it reads WKCEKCSKFYAVQSDWKAHTKICGT. Residues cysteine 161, cysteine 164, histidine 177, cysteine 181, cysteine 188, cysteine 190, histidine 203, and cysteine 207 each contribute to the Zn(2+) site. The CCHC-type 2; atypical zinc finger occupies 186 to 209; the sequence is YRCDCGTLFSRKDTFITHRAFCDA. Positions 196–208 are SHR-binding; that stretch reads RKDTFITHRAFCD.

It is found in the nucleus. Functionally, probable transcription factor. The protein is Protein indeterminate-domain 12 of Arabidopsis thaliana (Mouse-ear cress).